The following is a 266-amino-acid chain: Dihydropteroate synthase (266 aa).

A Pterin-binding domain is found at 12 to 260 (AAIMGILNVT…DVKANQEIVA (249 aa)). N19 contributes to the Mg(2+) binding site. (7,8-dihydropterin-6-yl)methyl diphosphate-binding positions include T59, D93, N112, D176, K212, and 248–250 (RVH).

This sequence belongs to the DHPS family. As to quaternary structure, homodimer or homotrimer. Mg(2+) serves as cofactor.

The enzyme catalyses (7,8-dihydropterin-6-yl)methyl diphosphate + 4-aminobenzoate = 7,8-dihydropteroate + diphosphate. The protein operates within cofactor biosynthesis; tetrahydrofolate biosynthesis; 7,8-dihydrofolate from 2-amino-4-hydroxy-6-hydroxymethyl-7,8-dihydropteridine diphosphate and 4-aminobenzoate: step 1/2. Functionally, catalyzes the condensation of para-aminobenzoate (pABA) with 6-hydroxymethyl-7,8-dihydropterin diphosphate (DHPt-PP) to form 7,8-dihydropteroate (H2Pte), the immediate precursor of folate derivatives. The protein is Dihydropteroate synthase (folP) of Streptococcus pyogenes.